Consider the following 90-residue polypeptide: MAGFWSKLFSSEEKPSSAQTAKDRLKVIVASEQGLGRRLSQDKIDQMKKEIMQVVSRYVSGVGEQHIQMQVRSEANIEMLEMNINLPEER.

Positions 1–21 (MAGFWSKLFSSEEKPSSAQTA) are disordered. Residues 10–21 (SSEEKPSSAQTA) show a composition bias toward basic and acidic residues.

Belongs to the MinE family.

Its function is as follows. Prevents the cell division inhibition by proteins MinC and MinD at internal division sites while permitting inhibition at polar sites. This ensures cell division at the proper site by restricting the formation of a division septum at the midpoint of the long axis of the cell. The polypeptide is Cell division topological specificity factor (Acinetobacter baumannii (strain AB307-0294)).